Consider the following 87-residue polypeptide: Cuticle protein 1 (87 aa).

Residue Gln1 is modified to Pyrrolidone carboxylic acid. 3 consecutive repeat copies span residues 5-20 (YPAG…YPNC), 43-58 (YPAG…YPFC), and 71-86 (YPAG…YPYC). Intrachain disulfides connect Cys14–Cys20, Cys52–Cys58, and Cys80–Cys86.

The protein is Cuticle protein 1 of Blaberus craniifer (Death's head cockroach).